A 177-amino-acid polypeptide reads, in one-letter code: ATP-dependent protease subunit HslV (177 aa).

Residue Thr2 is part of the active site. Na(+)-binding residues include Ala159, Asp162, and Thr165.

The protein belongs to the peptidase T1B family. HslV subfamily. In terms of assembly, a double ring-shaped homohexamer of HslV is capped on each side by a ring-shaped HslU homohexamer. The assembly of the HslU/HslV complex is dependent on binding of ATP.

It localises to the cytoplasm. The enzyme catalyses ATP-dependent cleavage of peptide bonds with broad specificity.. Allosterically activated by HslU binding. Protease subunit of a proteasome-like degradation complex believed to be a general protein degrading machinery. This Lactobacillus leichmannii protein is ATP-dependent protease subunit HslV.